A 99-amino-acid chain; its full sequence is UPF0122 protein UU142 (99 aa).

Belongs to the UPF0122 family.

Functionally, might take part in the signal recognition particle (SRP) pathway. This is inferred from the conservation of its genetic proximity to ftsY/ffh. May be a regulatory protein. In Ureaplasma parvum serovar 3 (strain ATCC 700970), this protein is UPF0122 protein UU142.